The sequence spans 606 residues: V-type proton ATPase catalytic subunit A (606 aa).

239-246 (GAFGCGKT) is a binding site for ATP.

It belongs to the ATPase alpha/beta chains family. In terms of assembly, V-ATPase is a heteromultimeric enzyme made up of two complexes: the ATP-hydrolytic V1 complex and the proton translocation V0 complex. The V1 complex consists of three catalytic AB heterodimers that form a heterohexamer, three peripheral stalks each consisting of EG heterodimers, one central rotor including subunits D and F, and the regulatory subunits C and H. The proton translocation complex V0 consists of the proton transport subunit a, a ring of proteolipid subunits c9c'', rotary subunit d, subunits e and f, and the accessory subunits vah-19/Ac45 and vah-20/PRR.

The enzyme catalyses ATP + H2O + 4 H(+)(in) = ADP + phosphate + 5 H(+)(out). Functionally, catalytic subunit of the V1 complex of vacuolar(H+)-ATPase (V-ATPase), a multisubunit enzyme composed of a peripheral complex (V1) that hydrolyzes ATP and a membrane integral complex (V0) that translocates protons. V-ATPase is responsible for acidifying and maintaining the pH of intracellular compartments and in some cell types, is targeted to the plasma membrane, where it is responsible for acidifying the extracellular environment. Required along with other vacuolar ATPase components for the removal of protein aggregates which form in immature oocytes in the distal gonad. This removal occurs as the oocytes mature and move to the proximal gonad, is triggered by the introduction of sperm through mating and occurs before fertilization. The introduction of sperm triggers V-ATPase accumulation in proximal oocytes and induces lysosomal acidification which leads to engulfing of protein aggregates by lysosomes and subsequent clearance of the aggregates. Lysosomal acidification also leads to changes in mitochondrial morphology and function. Mitochondria in distal immature oocytes are fragmented, produce high levels of reactive oxygen species (ROS) and have high membrane potential, indicative of metabolic inactivity. In contrast, mitochondria in proximal mature oocytes are tubular with lower ROS levels and membrane potential, indicative of an active metabolic state required for aggregate mobilization before clearance. Involved in receptor-mediated endocytosis. This Caenorhabditis briggsae protein is V-type proton ATPase catalytic subunit A.